The sequence spans 79 residues: UPF0337 protein YhjA (79 aa).

Positions 1–30 (MALNDKLDATKDKVSGKVKETTGKVTGDEK) are disordered.

It belongs to the UPF0337 (CsbD) family.

The chain is UPF0337 protein YhjA (yhjA) from Lactococcus lactis subsp. lactis (strain IL1403) (Streptococcus lactis).